A 734-amino-acid polypeptide reads, in one-letter code: Photosystem I P700 chlorophyll a apoprotein A2 (734 aa).

8 consecutive transmembrane segments (helical) span residues 46–69 (IFASHFGHLAVIFLWTSGNLFHVA), 135–158 (LYAGSLFLLFLAGVFLFAGWLHLQ), 175–199 (LNHHLSGLFGFSSLAWSAHLIHVAI), 273–291 (IAHHHLAIGVVFIFAGHMY), 330–353 (LHFQLGLALASLGVITSLVAQHMY), 369–395 (SALYTHHQYIAGFLMVGAFAHGAIFFV), 417–439 (AIISHLSWVSLFLGFHTLGIYVH), and 517–535 (FLIHHAIALALHTTTLILV). [4Fe-4S] cluster is bound by residues Cys559 and Cys568. The next 2 membrane-spanning stretches (helical) occupy residues 575 to 596 (AFYLSMFWMLNTIGWVTFYWHW) and 643 to 665 (LSVWSWMFLFGHLIWATGFMFLI). Chlorophyll a contacts are provided by His654, Met662, and Tyr670. Trp671 provides a ligand contact to phylloquinone. Residues 707 to 727 (LVGLIHFTAGYIFTYAAFVIA) traverse the membrane as a helical segment.

This sequence belongs to the PsaA/PsaB family. In terms of assembly, the PsaA/B heterodimer binds the P700 chlorophyll special pair and subsequent electron acceptors. PSI consists of a core antenna complex that captures photons, and an electron transfer chain that converts photonic excitation into a charge separation. The eukaryotic PSI reaction center is composed of at least 11 subunits. P700 is a chlorophyll a/chlorophyll a' dimer, A0 is one or more chlorophyll a, A1 is one or both phylloquinones and FX is a shared 4Fe-4S iron-sulfur center. serves as cofactor.

It is found in the plastid. The protein resides in the chloroplast thylakoid membrane. It catalyses the reaction reduced [plastocyanin] + hnu + oxidized [2Fe-2S]-[ferredoxin] = oxidized [plastocyanin] + reduced [2Fe-2S]-[ferredoxin]. PsaA and PsaB bind P700, the primary electron donor of photosystem I (PSI), as well as the electron acceptors A0, A1 and FX. PSI is a plastocyanin/cytochrome c6-ferredoxin oxidoreductase, converting photonic excitation into a charge separation, which transfers an electron from the donor P700 chlorophyll pair to the spectroscopically characterized acceptors A0, A1, FX, FA and FB in turn. Oxidized P700 is reduced on the lumenal side of the thylakoid membrane by plastocyanin or cytochrome c6. This Rhodomonas salina (Cryptomonas salina) protein is Photosystem I P700 chlorophyll a apoprotein A2.